Here is a 319-residue protein sequence, read N- to C-terminus: HTH-type transcriptional regulator YidZ (319 aa).

The region spanning 8-65 (LDLNLLLCLQLLMQERSVTKAAKRMNVTPSAVSKSLSKLRTWFDDPLFVNTPLGLTPT) is the HTH lysR-type domain. Positions 25–44 (VTKAAKRMNVTPSAVSKSLS) form a DNA-binding region, H-T-H motif.

The protein belongs to the LysR transcriptional regulatory family.

Functionally, involved in anaerobic NO protection. The sequence is that of HTH-type transcriptional regulator YidZ from Citrobacter koseri (strain ATCC BAA-895 / CDC 4225-83 / SGSC4696).